The primary structure comprises 118 residues: UPF0102 protein CHY_1414 (118 aa).

Belongs to the UPF0102 family.

In Carboxydothermus hydrogenoformans (strain ATCC BAA-161 / DSM 6008 / Z-2901), this protein is UPF0102 protein CHY_1414.